A 314-amino-acid polypeptide reads, in one-letter code: Small ribosomal subunit biogenesis GTPase RsgA (314 aa).

A disordered region spans residues Met-1–Gln-21. Positions Ser-85 to Phe-246 constitute a CP-type G domain. GTP contacts are provided by residues Asn-134–Asp-137 and Gly-188–Thr-196. Residues Cys-270, Cys-275, His-277, and Cys-283 each contribute to the Zn(2+) site.

This sequence belongs to the TRAFAC class YlqF/YawG GTPase family. RsgA subfamily. In terms of assembly, monomer. Associates with 30S ribosomal subunit, binds 16S rRNA. Zn(2+) serves as cofactor.

Its subcellular location is the cytoplasm. One of several proteins that assist in the late maturation steps of the functional core of the 30S ribosomal subunit. Helps release RbfA from mature subunits. May play a role in the assembly of ribosomal proteins into the subunit. Circularly permuted GTPase that catalyzes slow GTP hydrolysis, GTPase activity is stimulated by the 30S ribosomal subunit. In Burkholderia mallei (strain ATCC 23344), this protein is Small ribosomal subunit biogenesis GTPase RsgA.